Here is a 37-residue protein sequence, read N- to C-terminus: Large ribosomal subunit protein bL36 (37 aa).

Belongs to the bacterial ribosomal protein bL36 family.

The protein is Large ribosomal subunit protein bL36 of Shewanella frigidimarina (strain NCIMB 400).